A 166-amino-acid polypeptide reads, in one-letter code: Large ribosomal subunit protein uL10 (166 aa).

This sequence belongs to the universal ribosomal protein uL10 family. As to quaternary structure, part of the ribosomal stalk of the 50S ribosomal subunit. The N-terminus interacts with L11 and the large rRNA to form the base of the stalk. The C-terminus forms an elongated spine to which L12 dimers bind in a sequential fashion forming a multimeric L10(L12)X complex.

Functionally, forms part of the ribosomal stalk, playing a central role in the interaction of the ribosome with GTP-bound translation factors. The polypeptide is Large ribosomal subunit protein uL10 (Phytoplasma australiense).